The sequence spans 1132 residues: SNF2 domain-containing protein CLASSY 4 (1132 aa).

Disordered regions lie at residues 24–104, 224–331, 376–396, and 525–544; these read NKSK…SKSF, LRGE…HHKK, DPVV…PRER, and PSVN…LPNR. The short motif at 47–54 is the Nuclear localization signal element; it reads KRRVNMRD. Residues 81–90 show a composition bias toward basic and acidic residues; it reads EYPEGKRDDE. Residues 92-103 show a composition bias toward polar residues; that stretch reads VGSTSGNLQSKS. Residues 233 to 242 are compositionally biased toward low complexity; that stretch reads SDEVVSLSSS. The span at 243–254 shows a compositional bias: acidic residues; the sequence is SDDEEDPLEELG. The segment covering 255 to 269 has biased composition (basic and acidic residues); it reads TDSREEVSGEDRDSG. Acidic residues-rich tracts occupy residues 270-282 and 291-309; these read ESDM…DSDS and DSSD…EDEE. 3 stretches are compositionally biased toward basic and acidic residues: residues 310 to 326, 376 to 392, and 525 to 539; these read GGTR…SEKV, DPVV…EHGK, and PSVN…RKGD. Positions 603 to 796 constitute a Helicase ATP-binding domain; it reads SVGVKGSGGC…SNVLCLARPA (194 aa). 616-623 is a binding site for ATP; the sequence is HKAGTGKT. The short motif at 747–750 is the DEAH box element; that stretch reads DEGH. In terms of domain architecture, Helicase C-terminal spans 934-1087; the sequence is DFIRISGTVK…ELVFSSTNEK (154 aa).

Belongs to the SNF2/RAD54 helicase family. In terms of assembly, interacts with NRPD1.

Its subcellular location is the nucleus. Its function is as follows. Probable chromatin remodeling factor. This is SNF2 domain-containing protein CLASSY 4 (CLSY4) from Arabidopsis thaliana (Mouse-ear cress).